We begin with the raw amino-acid sequence, 298 residues long: Probable endonuclease 4 (298 aa).

Zn(2+) is bound by residues His69, His111, Glu146, Asp180, His183, His215, Asp228, His230, and Glu260.

This sequence belongs to the AP endonuclease 2 family. Zn(2+) is required as a cofactor.

It catalyses the reaction Endonucleolytic cleavage to 5'-phosphooligonucleotide end-products.. In terms of biological role, endonuclease IV plays a role in DNA repair. It cleaves phosphodiester bonds at apurinic or apyrimidinic (AP) sites, generating a 3'-hydroxyl group and a 5'-terminal sugar phosphate. This Bacillus cereus (strain G9842) protein is Probable endonuclease 4.